Consider the following 475-residue polypeptide: Methylenetetrahydrofolate--tRNA-(uracil-5-)-methyltransferase TrmFO (475 aa).

An FAD-binding site is contributed by 9–14; sequence GGGLAG. The interval 427-447 is disordered; that stretch reads APRNETGRRLRGPEKAALKKR.

This sequence belongs to the MnmG family. TrmFO subfamily. FAD serves as cofactor.

It is found in the cytoplasm. It catalyses the reaction uridine(54) in tRNA + (6R)-5,10-methylene-5,6,7,8-tetrahydrofolate + NADH + H(+) = 5-methyluridine(54) in tRNA + (6S)-5,6,7,8-tetrahydrofolate + NAD(+). The enzyme catalyses uridine(54) in tRNA + (6R)-5,10-methylene-5,6,7,8-tetrahydrofolate + NADPH + H(+) = 5-methyluridine(54) in tRNA + (6S)-5,6,7,8-tetrahydrofolate + NADP(+). Functionally, catalyzes the folate-dependent formation of 5-methyl-uridine at position 54 (M-5-U54) in all tRNAs. This is Methylenetetrahydrofolate--tRNA-(uracil-5-)-methyltransferase TrmFO from Methylobacterium radiotolerans (strain ATCC 27329 / DSM 1819 / JCM 2831 / NBRC 15690 / NCIMB 10815 / 0-1).